A 142-amino-acid chain; its full sequence is Large ribosomal subunit protein uL13 (142 aa).

Belongs to the universal ribosomal protein uL13 family. Part of the 50S ribosomal subunit.

Functionally, this protein is one of the early assembly proteins of the 50S ribosomal subunit, although it is not seen to bind rRNA by itself. It is important during the early stages of 50S assembly. This Ralstonia pickettii (strain 12J) protein is Large ribosomal subunit protein uL13.